The primary structure comprises 63 residues: ATPase inhibitor, mitochondrial (63 aa).

Residues 1-23 (TAGATGATRQDGSTDAFEKREKA) are disordered. Residues 18-62 (EKREKAQEDLYIRQHEKEQLEALKESLKKQKKSLDDLEBKIDDLT) adopt a coiled-coil conformation.

It belongs to the ATPase inhibitor family.

It localises to the mitochondrion. Its function is as follows. This protein forms a one-to-one complex with ATPase to inhibit the enzyme activity completely. This Cyberlindnera jadinii (Torula yeast) protein is ATPase inhibitor, mitochondrial.